Reading from the N-terminus, the 91-residue chain is DNA-directed RNA polymerase subunit omega (91 aa).

The protein belongs to the RNA polymerase subunit omega family. In terms of assembly, the RNAP catalytic core consists of 2 alpha, 1 beta, 1 beta' and 1 omega subunit. When a sigma factor is associated with the core the holoenzyme is formed, which can initiate transcription.

The catalysed reaction is RNA(n) + a ribonucleoside 5'-triphosphate = RNA(n+1) + diphosphate. In terms of biological role, promotes RNA polymerase assembly. Latches the N- and C-terminal regions of the beta' subunit thereby facilitating its interaction with the beta and alpha subunits. The protein is DNA-directed RNA polymerase subunit omega of Actinobacillus pleuropneumoniae serotype 5b (strain L20).